Reading from the N-terminus, the 65-residue chain is Keratin-associated protein 23-1 (65 aa).

As to quaternary structure, interacts with hair keratins.

Functionally, in the hair cortex, hair keratin intermediate filaments are embedded in an interfilamentous matrix, consisting of hair keratin-associated proteins (KRTAP), which are essential for the formation of a rigid and resistant hair shaft through their extensive disulfide bond cross-linking with abundant cysteine residues of hair keratins. The matrix proteins include the high-sulfur and high-glycine-tyrosine keratins. The protein is Keratin-associated protein 23-1 (KRTAP23-1) of Homo sapiens (Human).